The following is a 61-amino-acid chain: Large ribosomal subunit protein bL32 (61 aa).

The protein belongs to the bacterial ribosomal protein bL32 family.

This chain is Large ribosomal subunit protein bL32, found in Hyphomonas neptunium (strain ATCC 15444).